Here is a 606-residue protein sequence, read N- to C-terminus: Chaperone protein DnaK (606 aa).

At Thr-174 the chain carries Phosphothreonine; by autocatalysis. Polar residues predominate over residues 579–593 (ASAAGNPGQGQTNEN). The interval 579–606 (ASAAGNPGQGQTNENPGGKTIDGDYKVN) is disordered.

Belongs to the heat shock protein 70 family.

Functionally, acts as a chaperone. This is Chaperone protein DnaK from Dictyoglomus thermophilum (strain ATCC 35947 / DSM 3960 / H-6-12).